The following is a 670-amino-acid chain: Histone-lysine N-methyltransferase, H3 lysine-9 specific SUVH1 (670 aa).

A disordered region spans residues 53–140 (YPFSSSQANQ…RPISRPENMN (88 aa)). A compositionally biased stretch (low complexity) spans 68–79 (NQAQYPPQHQQP). Positions 123-133 (VKRRIPKKRPI) are enriched in basic residues. In terms of domain architecture, YDG spans 211–357 (GIVPGVEIGD…HNTFKYKLVR (147 aa)). In terms of domain architecture, Pre-SET spans 432-492 (FGCDCANLCK…TCKNKVTQMG (61 aa)). The Zn(2+) site is built by C434, C436, C440, C447, C449, C475, C479, C481, and C484. The 145-residue stretch at 495–639 (VRLEVFKTAN…PMTELTYDYG (145 aa)) folds into the SET domain. Residues 505–507 (RGW), D541, Y543, R593, and 596–597 (NH) contribute to the S-adenosyl-L-methionine site. Zn(2+) contacts are provided by C599, C658, C660, and C665. One can recognise a Post-SET domain in the interval 654-670 (GKRKCFCGSAYCRGSFG).

Belongs to the class V-like SAM-binding methyltransferase superfamily. Histone-lysine methyltransferase family. Suvar3-9 subfamily. In terms of tissue distribution, expressed in leaves stems and flowers.

The protein localises to the nucleus. Its subcellular location is the chromosome. The protein resides in the centromere. The catalysed reaction is L-lysyl(9)-[histone H3] + 2 S-adenosyl-L-methionine = N(6),N(6)-dimethyl-L-lysyl(9)-[histone H3] + 2 S-adenosyl-L-homocysteine + 2 H(+). Functionally, histone methyltransferase. Methylates 'Lys-9' of histone H3. H3 'Lys-9' methylation represents a specific tag for epigenetic transcriptional repression. In Arabidopsis thaliana (Mouse-ear cress), this protein is Histone-lysine N-methyltransferase, H3 lysine-9 specific SUVH1 (SUVH1).